The chain runs to 146 residues: Large ribosomal subunit protein uL15 (146 aa).

The tract at residues 1 to 61 is disordered; the sequence is MELNSLKPAA…GGQMPMHRRL (61 aa). Over residues 30 to 39 the composition is skewed to basic residues; it reads TATKGHKGQK.

Belongs to the universal ribosomal protein uL15 family. Part of the 50S ribosomal subunit.

In terms of biological role, binds to the 23S rRNA. In Geotalea uraniireducens (strain Rf4) (Geobacter uraniireducens), this protein is Large ribosomal subunit protein uL15.